A 529-amino-acid chain; its full sequence is GMP synthase [glutamine-hydrolyzing] (529 aa).

A Glutamine amidotransferase type-1 domain is found at 16–205 (PVLVVDFGAQ…LHDFAGLDAD (190 aa)). Cys93 acts as the Nucleophile in catalysis. Residues His179 and Glu181 contribute to the active site. In terms of domain architecture, GMPS ATP-PPase spans 206–403 (WTAANIAGVL…LDLPEEIVAR (198 aa)). 233 to 239 (SGGVDSA) provides a ligand contact to ATP.

Homodimer.

The catalysed reaction is XMP + L-glutamine + ATP + H2O = GMP + L-glutamate + AMP + diphosphate + 2 H(+). It functions in the pathway purine metabolism; GMP biosynthesis; GMP from XMP (L-Gln route): step 1/1. Catalyzes the synthesis of GMP from XMP. In Mycobacterium leprae (strain Br4923), this protein is GMP synthase [glutamine-hydrolyzing].